Reading from the N-terminus, the 329-residue chain is Delta-aminolevulinic acid dehydratase (329 aa).

Lysine 202 acts as the Schiff-base intermediate with substrate in catalysis. 5-aminolevulinate-binding residues include arginine 212 and arginine 223. Position 239 (glutamate 239) interacts with Mg(2+). Lysine 254 acts as the Schiff-base intermediate with substrate in catalysis. 2 residues coordinate 5-aminolevulinate: serine 280 and tyrosine 319.

It belongs to the ALAD family. Homooctamer.

It carries out the reaction 2 5-aminolevulinate = porphobilinogen + 2 H2O + H(+). It participates in porphyrin-containing compound metabolism; protoporphyrin-IX biosynthesis; coproporphyrinogen-III from 5-aminolevulinate: step 1/4. Functionally, catalyzes an early step in the biosynthesis of tetrapyrroles. Binds two molecules of 5-aminolevulinate per subunit, each at a distinct site, and catalyzes their condensation to form porphobilinogen. The chain is Delta-aminolevulinic acid dehydratase (hemB) from Mycobacterium tuberculosis (strain CDC 1551 / Oshkosh).